The sequence spans 228 residues: Cytochrome c oxidase subunit 2 (228 aa).

Topologically, residues 1–26 (MSTWANLGLQDSASPLMEQLIFFHDH) are mitochondrial intermembrane. Residues 27–48 (ALLILVMITVLVGYLMFMLFFN) form a helical membrane-spanning segment. The Mitochondrial matrix segment spans residues 49 to 62 (NYVNRFLLHGQLIE). Residues 63–82 (MIWTILPAIILLFIALPSLR) form a helical membrane-spanning segment. Residues 83 to 228 (LLYLLDEINE…FIKWISSNNS (146 aa)) lie on the Mitochondrial intermembrane side of the membrane. Cu cation contacts are provided by histidine 161, cysteine 196, glutamate 198, cysteine 200, histidine 204, and methionine 207. Glutamate 198 contacts Mg(2+).

Belongs to the cytochrome c oxidase subunit 2 family. Component of the cytochrome c oxidase (complex IV, CIV), a multisubunit enzyme composed of a catalytic core of 3 subunits and several supernumerary subunits. The complex exists as a monomer or a dimer and forms supercomplexes (SCs) in the inner mitochondrial membrane with ubiquinol-cytochrome c oxidoreductase (cytochrome b-c1 complex, complex III, CIII). Cu cation serves as cofactor.

The protein localises to the mitochondrion inner membrane. It carries out the reaction 4 Fe(II)-[cytochrome c] + O2 + 8 H(+)(in) = 4 Fe(III)-[cytochrome c] + 2 H2O + 4 H(+)(out). Its function is as follows. Component of the cytochrome c oxidase, the last enzyme in the mitochondrial electron transport chain which drives oxidative phosphorylation. The respiratory chain contains 3 multisubunit complexes succinate dehydrogenase (complex II, CII), ubiquinol-cytochrome c oxidoreductase (cytochrome b-c1 complex, complex III, CIII) and cytochrome c oxidase (complex IV, CIV), that cooperate to transfer electrons derived from NADH and succinate to molecular oxygen, creating an electrochemical gradient over the inner membrane that drives transmembrane transport and the ATP synthase. Cytochrome c oxidase is the component of the respiratory chain that catalyzes the reduction of oxygen to water. Electrons originating from reduced cytochrome c in the intermembrane space (IMS) are transferred via the dinuclear copper A center (CU(A)) of subunit 2 and heme A of subunit 1 to the active site in subunit 1, a binuclear center (BNC) formed by heme A3 and copper B (CU(B)). The BNC reduces molecular oxygen to 2 water molecules using 4 electrons from cytochrome c in the IMS and 4 protons from the mitochondrial matrix. This chain is Cytochrome c oxidase subunit 2 (mt:CoII), found in Drosophila simulans (Fruit fly).